A 202-amino-acid chain; its full sequence is Transmembrane 4 L6 family member 1 (202 aa).

Topologically, residues 1–9 are cytoplasmic; the sequence is MCYVKCARY. The chain crosses the membrane as a helical span at residues 10-30; sequence IGYSLVWAAVFCIVANALLYF. At 31 to 49 the chain is on the extracellular side; that stretch reads PNGETKYATEDHLSRFVWY. The helical transmembrane segment at 50–70 threads the bilayer; that stretch reads FAGIVGGGLLMLLPAFVFIGM. Over 71 to 93 the chain is Cytoplasmic; it reads DEEDCCGCCGYENYGKRCSMLSS. A helical membrane pass occupies residues 94-114; that stretch reads VLAALIGIVGSAYCVIVASLG. Residues 115–161 lie on the Extracellular side of the membrane; that stretch reads LAEGPKCSDAHGVWNYTFASTEGQYLLNSSMWSKCYEPKHIVEWHVT. 2 N-linked (GlcNAc...) asparagine glycosylation sites follow: Asn129 and Asn142. A helical transmembrane segment spans residues 162 to 182; it reads LFSILLAFAAVEFILCLIQVI. Over 183–202 the chain is Cytoplasmic; that stretch reads NGMLGGLCGYCCSRQQQYNC.

The protein belongs to the L6 tetraspanin family. Present in high molecular weight complexes in tumor cells. Interacts with SDCBP2. Highly expressed in skin and lung. Moderately expressed in lymph nodes and kidneys. Also present in thymic stroma and fibroblasts.

The protein resides in the membrane. This is Transmembrane 4 L6 family member 1 (Tm4sf1) from Mus musculus (Mouse).